Reading from the N-terminus, the 112-residue chain is 2Fe-2S ferredoxin (112 aa).

Residues isoleucine 5 to threonine 107 enclose the 2Fe-2S ferredoxin-type domain. [2Fe-2S] cluster-binding residues include cysteine 42, cysteine 48, cysteine 51, and cysteine 88.

Belongs to the adrenodoxin/putidaredoxin family. [2Fe-2S] cluster serves as cofactor.

In terms of biological role, ferredoxin are iron-sulfur proteins that transfer electrons in a wide variety of metabolic reactions. The chain is 2Fe-2S ferredoxin (fdxB) from Rickettsia conorii (strain ATCC VR-613 / Malish 7).